The primary structure comprises 603 residues: Palladin (603 aa).

An interaction with VASP region spans residues 63 to 67; sequence FPPPP. Phosphoserine is present on Ser-133. The disordered stretch occupies residues 134–156; sequence PPTPAALLSPTKEPPPLLAKPKL. Residue Thr-136 is modified to Phosphothreonine. Phosphoserine occurs at positions 142, 170, 256, and 261. Positions 278–362 constitute an Ig-like C2-type 1 domain; sequence PFFEMKLKHY…MAANTQGRVS (85 aa). Residues 373 to 402 are disordered; that stretch reads NQRGRSPRSPPGHPHARRPRSRSRDSGDEN. Ser-378, Ser-381, and Ser-393 each carry phosphoserine. Ser-395 is subject to Phosphoserine; by PKB/AKT1. At Ser-398 the chain carries Phosphoserine. Ig-like C2-type domains lie at 412-503 and 511-601; these read PHFL…LVVA and PVFI…ARLD. Interaction with EZR stretches follow at residues 414-503 and 513-603; these read FLQA…LVVA and FIEK…LDVY. Cys-433 and Cys-485 are disulfide-bonded.

It belongs to the myotilin/palladin family. As to quaternary structure, interacts with EPS8. Interacts with LASP1. Interacts with VASP. Interacts with ACTN. Interacts with SORBS2. Interacts with PFN1. Interacts with LPP. Interacts with SPIN90. Interacts with SRC. Interacts with EZR. Interacts with RAI14. Phosphorylated predominantly on serines and, to a lesser extent, on tyrosines. Phosphorylation at Ser-395 by PKB/AKT1 modulates cytoskeletal organization and cell motility. In adult central nervous system is detected in the brain and spinal cord, specially in the olfactory bulb, cerebral and cerebellar cortices, hippocampus, amygdala, superior colluculus, and superficial laminae of the spinal dorsal horn.

It is found in the cytoplasm. Its subcellular location is the cytoskeleton. The protein localises to the cell junction. It localises to the focal adhesion. The protein resides in the myofibril. It is found in the sarcomere. Its subcellular location is the z line. The protein localises to the cell projection. It localises to the ruffle. The protein resides in the podosome. It is found in the lamellipodium. Its subcellular location is the axon. The protein localises to the growth cone. Functionally, cytoskeletal protein required for organization of normal actin cytoskeleton. Roles in establishing cell morphology, motility, cell adhesion and cell-extracellular matrix interactions in a variety of cell types. May function as a scaffolding molecule with the potential to influence both actin polymerization and the assembly of existing actin filaments into higher-order arrays. Binds to proteins that bind to either monomeric or filamentous actin. Localizes at sites where active actin remodeling takes place, such as lamellipodia and membrane ruffles. Different isoforms may have functional differences. Plays a role in neurite outgrowth and in the establishment of polarity during neuronal morphogenesis. Participates in the acquisition of the reactive astrocyte morphology. This is Palladin (Palld) from Rattus norvegicus (Rat).